We begin with the raw amino-acid sequence, 544 residues long: Cytochrome P450 2U1 (544 aa).

A run of 4 helical transmembrane segments spans residues 30-50 (LDPS…GWSW), 113-133 (VYGS…LSDF), 261-281 (ICLN…YLPF), and 342-362 (LFYI…NSLL). Position 490 (C490) interacts with heme. A helical membrane pass occupies residues 495–515 (LAKMELFLMFVSLMQSFAFAL).

It belongs to the cytochrome P450 family. Requires heme as cofactor. In terms of tissue distribution, widely expressed with stronger expression in thymus, heart and cerebellum.

It is found in the endoplasmic reticulum membrane. The protein localises to the microsome membrane. The protein resides in the mitochondrion inner membrane. It carries out the reaction an omega-methyl-long-chain fatty acid + reduced [NADPH--hemoprotein reductase] + O2 = an omega-hydroxy-long-chain fatty acid + oxidized [NADPH--hemoprotein reductase] + H2O + H(+). It catalyses the reaction (5Z,8Z,11Z,14Z)-eicosatetraenoate + reduced [NADPH--hemoprotein reductase] + O2 = 19-hydroxy-(5Z,8Z,11Z,14Z)-eicosatetraenoate + oxidized [NADPH--hemoprotein reductase] + H2O + H(+). The enzyme catalyses (5Z,8Z,11Z,14Z)-eicosatetraenoate + reduced [NADPH--hemoprotein reductase] + O2 = 20-hydroxy-(5Z,8Z,11Z,14Z)-eicosatetraenoate + oxidized [NADPH--hemoprotein reductase] + H2O + H(+). The catalysed reaction is N-[(5Z,8Z,11Z,14Z)-eicosatetraenoyl]-serotonin + reduced [NADPH--hemoprotein reductase] + O2 = 2-oxo-N-[(5Z,8Z,11Z,14Z)-eicosatetraenoyl]-serotonin + oxidized [NADPH--hemoprotein reductase] + H2O + H(+). The protein operates within lipid metabolism; arachidonate metabolism. Its function is as follows. A cytochrome P450 monooxygenase involved in the metabolism of arachidonic acid and its conjugates. Mechanistically, uses molecular oxygen inserting one oxygen atom into a substrate, and reducing the second into a water molecule, with two electrons provided by NADPH via cytochrome P450 reductase (CPR; NADPH-ferrihemoprotein reductase). Acts as an omega and omega-1 hydroxylase for arachidonic acid and possibly for other long chain fatty acids. May modulate the arachidonic acid signaling pathway and play a role in other fatty acid signaling processes. May down-regulate the biological activities of N-arachidonoyl-serotonin, an endocannabinoid that has anti-nociceptive effects through inhibition of fatty acid amide hydrolase FAAH, TRPV1 receptor and T-type calcium channels. Catalyzes C-2 oxidation of the indole ring of N-arachidonoyl-serotonin forming a less active product 2-oxo-N-arachidonoyl-serotonin. This is Cytochrome P450 2U1 from Homo sapiens (Human).